A 212-amino-acid chain; its full sequence is MSDSAMEPQNPLTSGDFTAADEPFRLFSEWLKDAERSEPNDPNAMTLATVDPDGLPDARMVLLKGLDDRGFVFYTNTESAKGRELTAHPKAALVFHWKSLRRQVRVRGPVERVTDAEADAYFATRPRLSQIGAWASQQSRPLEGRFALEAAVATTTARYAVGSVPRPPHWTGFRILPVQIEFWHDRPFRLHDRVVFKRENPEIDWEKSRLYP.

The disordered stretch occupies residues 1-20 (MSDSAMEPQNPLTSGDFTAA). Residues 59-64 (RMVLLK), 74-75 (YT), Lys-81, and Gln-103 contribute to the FMN site. Lys-64 is a substrate binding site. Residues Tyr-121, Arg-125, and Ser-129 each coordinate substrate. FMN-binding positions include 138–139 (QS) and Trp-183. 189–191 (RLH) contributes to the substrate binding site. Arg-193 contributes to the FMN binding site.

The protein belongs to the pyridoxamine 5'-phosphate oxidase family. In terms of assembly, homodimer. Requires FMN as cofactor.

The enzyme catalyses pyridoxamine 5'-phosphate + O2 + H2O = pyridoxal 5'-phosphate + H2O2 + NH4(+). The catalysed reaction is pyridoxine 5'-phosphate + O2 = pyridoxal 5'-phosphate + H2O2. It participates in cofactor metabolism; pyridoxal 5'-phosphate salvage; pyridoxal 5'-phosphate from pyridoxamine 5'-phosphate: step 1/1. It functions in the pathway cofactor metabolism; pyridoxal 5'-phosphate salvage; pyridoxal 5'-phosphate from pyridoxine 5'-phosphate: step 1/1. Functionally, catalyzes the oxidation of either pyridoxine 5'-phosphate (PNP) or pyridoxamine 5'-phosphate (PMP) into pyridoxal 5'-phosphate (PLP). The protein is Pyridoxine/pyridoxamine 5'-phosphate oxidase of Azorhizobium caulinodans (strain ATCC 43989 / DSM 5975 / JCM 20966 / LMG 6465 / NBRC 14845 / NCIMB 13405 / ORS 571).